The sequence spans 315 residues: Kiwa protein KwaB (315 aa).

In terms of biological role, component of antiviral defense system Kiwa, composed of KwaA and KwaB. Expression of Kiwa in E.coli (strain MG1655) confers resistance to phages lambda and SECphi18. The chain is Kiwa protein KwaB from Escherichia coli O55:H7 (strain RM12579 / EPEC).